A 442-amino-acid polypeptide reads, in one-letter code: C4-dicarboxylate transport protein (442 aa).

Transmembrane regions (helical) follow at residues 19 to 39 (QLYF…HFEP), 55 to 75 (LVKM…IAGM), 90 to 110 (AYFL…AHVV), 161 to 181 (ILQV…VGDA), 199 to 219 (LVGI…AFTI), 232 to 252 (WLVG…LGFV), 318 to 338 (IYMT…LTLG), and 366 to 386 (AATL…ILGV).

It belongs to the dicarboxylate/amino acid:cation symporter (DAACS) (TC 2.A.23) family.

It localises to the cell inner membrane. Its function is as follows. Responsible for the transport of dicarboxylates such as succinate, fumarate, and malate from the periplasm across the membrane. This Delftia acidovorans (strain DSM 14801 / SPH-1) protein is C4-dicarboxylate transport protein.